The chain runs to 427 residues: Large ribosomal subunit protein uL4 (427 aa).

A2 carries the post-translational modification N-acetylalanine. N6-acetyllysine is present on K14. R97 carries the omega-N-methylarginine modification. N6-acetyllysine is present on K106. A Glycyl lysine isopeptide (Lys-Gly) (interchain with G-Cter in SUMO2) cross-link involves residue K239. K259 carries the N6-acetyllysine modification. T266 carries the post-translational modification Phosphothreonine. Phosphoserine occurs at positions 290 and 295. R300 carries the post-translational modification Citrulline. K327 participates in a covalent cross-link: Glycyl lysine isopeptide (Lys-Gly) (interchain with G-Cter in SUMO2). Residues K333 and K353 each carry the N6-acetyllysine modification. K364 is modified (N6-acetyllysine; alternate). A Glycyl lysine isopeptide (Lys-Gly) (interchain with G-Cter in SUMO1); alternate cross-link involves residue K364. S365 carries the post-translational modification Phosphoserine. The segment at 369-427 (AAVAGKKPVVGKKGKKVAVGVKKQKKPLVGKKAAATKKPAPEKKSTEKKPTTEEKKPAA) is disordered. The span at 377-397 (VVGKKGKKVAVGVKKQKKPLV) shows a compositional bias: basic residues. A compositionally biased stretch (basic and acidic residues) spans 407-427 (PAPEKKSTEKKPTTEEKKPAA).

It belongs to the universal ribosomal protein uL4 family. As to quaternary structure, component of the large ribosomal subunit. May bind IPO9 with low affinity. Interacts with RBM3. Post-translationally, citrullinated by PADI4.

Its subcellular location is the cytoplasm. Component of the large ribosomal subunit. The ribosome is a large ribonucleoprotein complex responsible for the synthesis of proteins in the cell. The protein is Large ribosomal subunit protein uL4 (RPL4) of Macaca fascicularis (Crab-eating macaque).